Consider the following 528-residue polypeptide: Probable rhamnogalacturonate lyase A (528 aa).

The N-terminal stretch at 1–20 (MLSKATLLLFLPSWARVTYA) is a signal peptide. An N-linked (GlcNAc...) asparagine glycan is attached at asparagine 46. A disulfide bond links cysteine 50 and cysteine 93. Asparagine 148 carries N-linked (GlcNAc...) asparagine glycosylation. A disulfide bridge connects residues cysteine 184 and cysteine 193. Asparagine 351 is a glycosylation site (N-linked (GlcNAc...) asparagine).

This sequence belongs to the polysaccharide lyase 4 family.

The protein resides in the secreted. The enzyme catalyses Endotype eliminative cleavage of L-alpha-rhamnopyranosyl-(1-&gt;4)-alpha-D-galactopyranosyluronic acid bonds of rhamnogalacturonan I domains in ramified hairy regions of pectin leaving L-rhamnopyranose at the reducing end and 4-deoxy-4,5-unsaturated D-galactopyranosyluronic acid at the non-reducing end.. Pectinolytic enzymes consist of four classes of enzymes: pectin lyase, polygalacturonase, pectin methylesterase and rhamnogalacturonase. Degrades the rhamnogalacturonan I (RG-I) backbone of pectin. The protein is Probable rhamnogalacturonate lyase A (rglA) of Aspergillus fumigatus (strain CBS 144.89 / FGSC A1163 / CEA10) (Neosartorya fumigata).